Reading from the N-terminus, the 255-residue chain is 1-(5-phosphoribosyl)-5-[(5-phosphoribosylamino)methylideneamino] imidazole-4-carboxamide isomerase (255 aa).

The Proton acceptor role is filled by Asp8. Residue Asp129 is the Proton donor of the active site.

It belongs to the HisA/HisF family.

The protein localises to the cytoplasm. The enzyme catalyses 1-(5-phospho-beta-D-ribosyl)-5-[(5-phospho-beta-D-ribosylamino)methylideneamino]imidazole-4-carboxamide = 5-[(5-phospho-1-deoxy-D-ribulos-1-ylimino)methylamino]-1-(5-phospho-beta-D-ribosyl)imidazole-4-carboxamide. Its pathway is amino-acid biosynthesis; L-histidine biosynthesis; L-histidine from 5-phospho-alpha-D-ribose 1-diphosphate: step 4/9. This is 1-(5-phosphoribosyl)-5-[(5-phosphoribosylamino)methylideneamino] imidazole-4-carboxamide isomerase from Synechococcus sp. (strain CC9902).